We begin with the raw amino-acid sequence, 598 residues long: Elongation factor 4 (598 aa).

In terms of domain architecture, tr-type G spans 2 to 184; that stretch reads KQIRNFSIIA…RLVKEIPAPE (183 aa). Residues 14 to 19 and 131 to 134 each bind GTP; these read DHGKST and NKID.

Belongs to the TRAFAC class translation factor GTPase superfamily. Classic translation factor GTPase family. LepA subfamily.

It is found in the cell inner membrane. The enzyme catalyses GTP + H2O = GDP + phosphate + H(+). Functionally, required for accurate and efficient protein synthesis under certain stress conditions. May act as a fidelity factor of the translation reaction, by catalyzing a one-codon backward translocation of tRNAs on improperly translocated ribosomes. Back-translocation proceeds from a post-translocation (POST) complex to a pre-translocation (PRE) complex, thus giving elongation factor G a second chance to translocate the tRNAs correctly. Binds to ribosomes in a GTP-dependent manner. This is Elongation factor 4 from Photorhabdus laumondii subsp. laumondii (strain DSM 15139 / CIP 105565 / TT01) (Photorhabdus luminescens subsp. laumondii).